The sequence spans 438 residues: Methylenetetrahydrofolate--tRNA-(uracil-5-)-methyltransferase TrmFO (438 aa).

9-14 is a binding site for FAD; it reads GGGLAG.

Belongs to the MnmG family. TrmFO subfamily. FAD serves as cofactor.

The protein resides in the cytoplasm. The catalysed reaction is uridine(54) in tRNA + (6R)-5,10-methylene-5,6,7,8-tetrahydrofolate + NADH + H(+) = 5-methyluridine(54) in tRNA + (6S)-5,6,7,8-tetrahydrofolate + NAD(+). It carries out the reaction uridine(54) in tRNA + (6R)-5,10-methylene-5,6,7,8-tetrahydrofolate + NADPH + H(+) = 5-methyluridine(54) in tRNA + (6S)-5,6,7,8-tetrahydrofolate + NADP(+). Its function is as follows. Catalyzes the folate-dependent formation of 5-methyl-uridine at position 54 (M-5-U54) in all tRNAs. The sequence is that of Methylenetetrahydrofolate--tRNA-(uracil-5-)-methyltransferase TrmFO from Lactobacillus johnsonii (strain CNCM I-12250 / La1 / NCC 533).